The sequence spans 103 residues: Pyrimidine/purine nucleoside phosphorylase (103 aa).

The protein belongs to the nucleoside phosphorylase PpnP family.

It carries out the reaction a purine D-ribonucleoside + phosphate = a purine nucleobase + alpha-D-ribose 1-phosphate. The catalysed reaction is adenosine + phosphate = alpha-D-ribose 1-phosphate + adenine. The enzyme catalyses cytidine + phosphate = cytosine + alpha-D-ribose 1-phosphate. It catalyses the reaction guanosine + phosphate = alpha-D-ribose 1-phosphate + guanine. It carries out the reaction inosine + phosphate = alpha-D-ribose 1-phosphate + hypoxanthine. The catalysed reaction is thymidine + phosphate = 2-deoxy-alpha-D-ribose 1-phosphate + thymine. The enzyme catalyses uridine + phosphate = alpha-D-ribose 1-phosphate + uracil. It catalyses the reaction xanthosine + phosphate = alpha-D-ribose 1-phosphate + xanthine. Its function is as follows. Catalyzes the phosphorolysis of diverse nucleosides, yielding D-ribose 1-phosphate and the respective free bases. Can use uridine, adenosine, guanosine, cytidine, thymidine, inosine and xanthosine as substrates. Also catalyzes the reverse reactions. The protein is Pyrimidine/purine nucleoside phosphorylase of Shewanella frigidimarina (strain NCIMB 400).